Reading from the N-terminus, the 458-residue chain is Probable plasmid replicative DNA helicase (458 aa).

The SF4 helicase domain maps to 194-458; that stretch reads KIDYVDGLPT…GKFTIQKEAW (265 aa). Residue 225-232 coordinates ATP; the sequence is ARPAMGKT.

It belongs to the helicase family. DnaB subfamily. In terms of assembly, homohexamer.

It catalyses the reaction Couples ATP hydrolysis with the unwinding of duplex DNA at the replication fork by translocating in the 5'-3' direction. This creates two antiparallel DNA single strands (ssDNA). The leading ssDNA polymer is the template for DNA polymerase III holoenzyme which synthesizes a continuous strand.. The enzyme catalyses ATP + H2O = ADP + phosphate + H(+). Functionally, a replicative DNA helicase, it participates in initiation and elongation during DNA replication. Travels ahead of the DNA replisome, separating dsDNA into templates for DNA synthesis. A processive ATP-dependent 5'-3' DNA helicase it has DNA-dependent ATPase activity. This Chlamydia psittaci (Chlamydophila psittaci) protein is Probable plasmid replicative DNA helicase.